The sequence spans 300 residues: MPKSSNFLDIDDLTTDELQTILDRATALKHGGDNAQFPGQTLGMLFEKPSTRTRISFETGMTQLGGHAIFLGPDDIQLGHGEPLSDTARVLSGYVDVVMARLFNHDDLLEIAAHADIPVINGLTDDAHPCQTLADLLTIKEEFGGFDDVTVVWIGDGNNVGQSFVIGAAMVGLDLTVVTPSGYGMDQSVLDQATALGHPPTIADTPGAAVSDADVVYTDVWISMGQEDQRNEKLTAFEGYQVNESLLANNSAQVMHCLPAHRGEEITDEVLTGTRTLVWDQAENRLHAQKGLLVELLSEN.

Carbamoyl phosphate-binding positions include S50 to T53, Q77, R101, and H128 to Q131. L-ornithine-binding positions include N159, D219, and S223–M224. Residues C257–L258 and R285 each bind carbamoyl phosphate.

This sequence belongs to the aspartate/ornithine carbamoyltransferase superfamily. OTCase family.

The protein resides in the cytoplasm. The catalysed reaction is carbamoyl phosphate + L-ornithine = L-citrulline + phosphate + H(+). It functions in the pathway amino-acid degradation; L-arginine degradation via ADI pathway; carbamoyl phosphate from L-arginine: step 2/2. Its function is as follows. Reversibly catalyzes the transfer of the carbamoyl group from carbamoyl phosphate (CP) to the N(epsilon) atom of ornithine (ORN) to produce L-citrulline. The sequence is that of Ornithine carbamoyltransferase from Haloquadratum walsbyi (strain DSM 16790 / HBSQ001).